Here is a 307-residue protein sequence, read N- to C-terminus: MANITAAMVKALREKTGAGMMDCKKALVEAEGNEEKAVEILRKKGLAKAAKKADRNAAEGRVEIYISDDYKKGSIAEVNCETDFVAKTDEFIEFVSETVKTINVNDIADTEALNKAPFGAGTFEEELKVKIAKIGENIVVRRIGTIKAPENGIVNGYIHAGGKVGVLVAAACDSEKTCEAIKDTLRDIAMHIAAMKPQYLNPEAVPADVIEKEKEIAKAQLLKEGKPEQVIDKIIPGKIKRFYSDVCVTEQEYVKAEKKETVAEALSKAAKAAGGEAKLVDFIRFEVGEGLVKNACNMADEVAAALS.

The segment at 82-85 (TDFV) is involved in Mg(2+) ion dislocation from EF-Tu.

It belongs to the EF-Ts family.

The protein resides in the cytoplasm. Its function is as follows. Associates with the EF-Tu.GDP complex and induces the exchange of GDP to GTP. It remains bound to the aminoacyl-tRNA.EF-Tu.GTP complex up to the GTP hydrolysis stage on the ribosome. This chain is Elongation factor Ts, found in Nautilia profundicola (strain ATCC BAA-1463 / DSM 18972 / AmH).